The primary structure comprises 46 residues: Protein PsbN (46 aa).

Residues 10 to 30 (LIITILAVTIAFTAVSLYTAF) traverse the membrane as a helical segment.

The protein belongs to the PsbN family.

Its subcellular location is the cellular thylakoid membrane. In terms of biological role, may play a role in photosystem I and II biogenesis. This is Protein PsbN from Acaryochloris marina (strain MBIC 11017).